A 485-amino-acid chain; its full sequence is Rhamnulokinase (485 aa).

Alanine 8–arginine 12 contacts ATP. Residues glycine 78 and histidine 231–threonine 233 each bind substrate. Aspartate 232 acts as the Proton acceptor in catalysis. Residue threonine 254 coordinates ATP. A substrate-binding site is contributed by asparagine 291. Glutamine 299 contributes to the ATP binding site. Cysteine 348 and cysteine 365 are oxidised to a cystine. Glycine 397 serves as a coordination point for ATP. Cysteines 408 and 412 form a disulfide.

Belongs to the rhamnulokinase family. Mg(2+) serves as cofactor.

It carries out the reaction L-rhamnulose + ATP = L-rhamnulose 1-phosphate + ADP + H(+). It participates in carbohydrate degradation; L-rhamnose degradation; glycerone phosphate from L-rhamnose: step 2/3. Functionally, involved in the catabolism of L-rhamnose (6-deoxy-L-mannose). Catalyzes the transfer of the gamma-phosphate group from ATP to the 1-hydroxyl group of L-rhamnulose to yield L-rhamnulose 1-phosphate. The sequence is that of Rhamnulokinase from Yersinia pestis bv. Antiqua (strain Antiqua).